The primary structure comprises 230 residues: Magnesium-protoporphyrin O-methyltransferase (230 aa).

It belongs to the class I-like SAM-binding methyltransferase superfamily. Magnesium protoporphyrin O-methyltransferase family.

The enzyme catalyses Mg-protoporphyrin IX + S-adenosyl-L-methionine = Mg-protoporphyrin IX 13-monomethyl ester + S-adenosyl-L-homocysteine. The protein operates within porphyrin-containing compound metabolism; chlorophyll biosynthesis (light-independent). Its function is as follows. Converts Mg-protoporphyrin IX to Mg-protoporphyrin IX methylester using S-adenosyl-L-methionine as a cofactor. This chain is Magnesium-protoporphyrin O-methyltransferase (chlM), found in Synechocystis sp. (strain ATCC 27184 / PCC 6803 / Kazusa).